We begin with the raw amino-acid sequence, 863 residues long: MICAL-like protein 1 (863 aa).

The Calponin-homology (CH) domain occupies 2–108 (AGPRGALLAW…YVSQYYNHFC (107 aa)). 2 disordered regions span residues 119-162 (RKGL…TPSS) and 224-670 (GTRS…PLIK). Over residues 125–135 (CSPPSVAPTPV) the composition is skewed to pro residues. Low complexity-rich tracts occupy residues 143–159 (GEELSSGSLSEQGTGQT) and 224–244 (GTRSGTRPGPFSQPKQQHQQQ). Positions 162-225 (STCAACQQHV…EHCARLGPGT (64 aa)) constitute an LIM zinc-binding domain. 2 positions are modified to phosphoserine: Ser295 and Ser309. Thr318 bears the Phosphothreonine mark. Residues 325 to 340 (LQQENLVEQAGSSSLV) show a composition bias toward polar residues. Pro residues predominate over residues 384 to 395 (APLPPSSSPGPP). Residue Ser391 is modified to Phosphoserine. Residues 425–427 (NPF) carry the NPF1 motif. The segment covering 427–438 (FEEEEEDKEEEA) has biased composition (acidic residues). The segment covering 439 to 450 (PAAPSLATSPAL) has biased composition (low complexity). Phosphothreonine is present on residues Thr467 and Thr469. A phosphoserine mark is found at Ser470, Ser471, Ser484, and Ser486. 3 stretches are compositionally biased toward low complexity: residues 482 to 495 (APSASPLALHASRL), 505 to 520 (PSPALSVESLSSESAS), and 553 to 566 (SLSTNSSLASSGEL). Phosphoserine is present on residues Ser578 and Ser621. The NPF2 motif lies at 633–635 (NPF). Over residues 638–656 (KPSPAASPATKKATKGSKP) the composition is skewed to low complexity. A mediates the interaction with RAB13 and RAB35 and intramolecular interaction with the CH domain region spans residues 652-863 (KGSKPVRPPA…AKSKSPRDKS (212 aa)). The 148-residue stretch at 671 to 818 (RKVQADQYIP…EEEEDKMLEA (148 aa)) folds into the bMERB domain. Positions 682–711 (EDIHGEMDTIERRLDALEHRGVLLEEKLRG) form a coiled coil. Positions 700-863 (HRGVLLEEKL…AKSKSPRDKS (164 aa)) are necessary and sufficient to associate with tubular recycling endosome membranes, mediate phosphatidic acid-binding and membrane tubulation. Ser740 carries the post-translational modification Phosphoserine. Positions 785–830 (MQELVTLIEQRNAIINCLDEDRQREEEEDKMLEAMIKKKEFQREAE) form a coiled coil.

In terms of assembly, homooligomer. Interacts (via NPF1 motif) with EHD1 (via EH domain); the interaction is direct and probably recruits EHD1 to membranes. Interacts with EHD3 (via EH domain). Interacts with RAB35 (GTP-bound form); the interaction is direct and probably recruits MICALL1 to membranes. Interacts with ACAP2; the interaction is indirect through RAB35. Interacts with RAB8A (GTP-bound form); regulates RAB8A association with recycling endosomes. Interacts with RAB13 (GTP-bound form). Interacts with ARF6 (GTP-bound form). Interacts with PACSIN2 (via the SH3 domain). Interacts with DPYSL2.

The protein localises to the recycling endosome membrane. The protein resides in the late endosome membrane. Its subcellular location is the cell projection. It is found in the cilium membrane. It localises to the cytoplasm. The protein localises to the cytoskeleton. The protein resides in the microtubule organizing center. Its subcellular location is the centrosome. It is found in the centriole. Its function is as follows. Lipid-binding protein with higher affinity for phosphatidic acid, a lipid enriched in recycling endosome membranes. On endosome membranes, acts as a downstream effector of Rab proteins recruiting cytosolic proteins to regulate membrane tubulation. Involved in a late step of receptor-mediated endocytosis regulating for instance endocytosed-EGF receptor trafficking. Alternatively, regulates slow endocytic recycling of endocytosed proteins back to the plasma membrane. Also involved in cargo protein delivery to the plasma membrane. Plays a role in ciliogenesis coordination, recruits EHD1 to primary cilium where it is anchored to the centriole through interaction with tubulins. May indirectly play a role in neurite outgrowth. The sequence is that of MICAL-like protein 1 (MICALL1) from Homo sapiens (Human).